Consider the following 377-residue polypeptide: WAT1-related protein At3g56620 (377 aa).

10 consecutive transmembrane segments (helical) span residues 13 to 33, 40 to 60, 67 to 87, 102 to 122, 142 to 162, 183 to 203, 210 to 230, 235 to 255, 274 to 294, and 299 to 319; these read FAMV…KVVL, YVLV…FALL, PKMT…GPLI, TFAG…SIIC, LVIV…ITFL, VFLL…AATL, LSLS…LTFV, LSAW…AGIM, IFVT…GFLI, and LNLG…TVLW. EamA domains lie at 22 to 152 and 190 to 318; these read YAGM…MLMI and FSWA…CTVL.

The protein belongs to the drug/metabolite transporter (DMT) superfamily. Plant drug/metabolite exporter (P-DME) (TC 2.A.7.4) family.

Its subcellular location is the membrane. This chain is WAT1-related protein At3g56620, found in Arabidopsis thaliana (Mouse-ear cress).